A 134-amino-acid chain; its full sequence is ATP synthase epsilon chain (134 aa).

This sequence belongs to the ATPase epsilon chain family. F-type ATPases have 2 components, CF(1) - the catalytic core - and CF(0) - the membrane proton channel. CF(1) has five subunits: alpha(3), beta(3), gamma(1), delta(1), epsilon(1). CF(0) has three main subunits: a, b and c.

The protein localises to the cell membrane. In terms of biological role, produces ATP from ADP in the presence of a proton gradient across the membrane. This Listeria monocytogenes serotype 4b (strain F2365) protein is ATP synthase epsilon chain.